Here is a 158-residue protein sequence, read N- to C-terminus: Transcription elongation factor GreA (158 aa).

The protein belongs to the GreA/GreB family.

Necessary for efficient RNA polymerase transcription elongation past template-encoded arresting sites. The arresting sites in DNA have the property of trapping a certain fraction of elongating RNA polymerases that pass through, resulting in locked ternary complexes. Cleavage of the nascent transcript by cleavage factors such as GreA or GreB allows the resumption of elongation from the new 3'terminus. GreA releases sequences of 2 to 3 nucleotides. In Ralstonia nicotianae (strain ATCC BAA-1114 / GMI1000) (Ralstonia solanacearum), this protein is Transcription elongation factor GreA.